Reading from the N-terminus, the 360-residue chain is Phospho-N-acetylmuramoyl-pentapeptide-transferase (360 aa).

10 helical membrane-spanning segments follow: residues 21–41 (YLSF…LWMG), 73–93 (TMGG…WANL), 94–114 (SNPY…VGFV), 132–152 (WKYF…YAYG), 168–188 (VMPQ…VGTS), 199–219 (GLAI…AWAT), 236–256 (ASEL…FLWF), 263–283 (VFMG…IAVL), 288–308 (LVLV…ILQV), and 338–358 (VIVR…ATLK).

The protein belongs to the glycosyltransferase 4 family. MraY subfamily. Mg(2+) serves as cofactor.

It is found in the cell inner membrane. It carries out the reaction UDP-N-acetyl-alpha-D-muramoyl-L-alanyl-gamma-D-glutamyl-meso-2,6-diaminopimeloyl-D-alanyl-D-alanine + di-trans,octa-cis-undecaprenyl phosphate = di-trans,octa-cis-undecaprenyl diphospho-N-acetyl-alpha-D-muramoyl-L-alanyl-D-glutamyl-meso-2,6-diaminopimeloyl-D-alanyl-D-alanine + UMP. The protein operates within cell wall biogenesis; peptidoglycan biosynthesis. Its function is as follows. Catalyzes the initial step of the lipid cycle reactions in the biosynthesis of the cell wall peptidoglycan: transfers peptidoglycan precursor phospho-MurNAc-pentapeptide from UDP-MurNAc-pentapeptide onto the lipid carrier undecaprenyl phosphate, yielding undecaprenyl-pyrophosphoryl-MurNAc-pentapeptide, known as lipid I. The sequence is that of Phospho-N-acetylmuramoyl-pentapeptide-transferase from Vibrio vulnificus (strain YJ016).